The following is a 193-amino-acid chain: dCTP deaminase (193 aa).

DCTP is bound by residues 110 to 115 (RSSLAR), aspartate 128, 136 to 138 (VLE), tyrosine 171, lysine 178, and glutamine 182. The Proton donor/acceptor role is filled by glutamate 138.

This sequence belongs to the dCTP deaminase family. In terms of assembly, homotrimer.

The catalysed reaction is dCTP + H2O + H(+) = dUTP + NH4(+). It participates in pyrimidine metabolism; dUMP biosynthesis; dUMP from dCTP (dUTP route): step 1/2. Its function is as follows. Catalyzes the deamination of dCTP to dUTP. In Buchnera aphidicola subsp. Schizaphis graminum (strain Sg), this protein is dCTP deaminase.